A 496-amino-acid polypeptide reads, in one-letter code: Acyltransferase M4 (496 aa).

Residue His163 is the Proton acceptor of the active site.

The protein belongs to the plant acyltransferase family. As to quaternary structure, monomer.

Its pathway is secondary metabolite biosynthesis. In terms of biological role, acyltransferase; part of the gene cluster that mediates the biosynthesis of squalestatin S1 (SQS1, also known as zaragozic acid A), a heavily oxidized fungal polyketide that offers potent cholesterol lowering activity by targeting squalene synthase (SS). SQS1 is composed of a 2,8-dioxobicyclic[3.2.1]octane-3,4,5-tricarboxyclic acid core that is connected to two lipophilic polyketide arms. These initial steps feature the priming of an unusual benzoic acid starter unit onto the highly reducing polyketide synthase pks2, followed by oxaloacetate extension and product release to generate a tricarboxylic acid containing product. The phenylalanine ammonia lyase (PAL) M7 and the acyl-CoA ligase M9 are involved in transforming phenylalanine into benzoyl-CoA. The citrate synthase-like protein R3 is involved in connecting the C-alpha-carbons of the hexaketide chain and oxaloacetate to afford the tricarboxylic acid unit. The potential hydrolytic enzymes, M8 and M10, are in close proximity to pks2 and may participate in product release. On the other side, the tetraketide arm is synthesized by a the squalestatin tetraketide synthase pks1 and enzymatically esterified to the core in the last biosynthetic step, by the acetyltransferase M4. The biosynthesis of the tetraketide must involve 3 rounds of chain extension. After the first and second rounds methyl-transfer occurs, and in all rounds of extension the ketoreductase and dehydratase are active. The enoyl reductase and C-MeT of pks1 are not active in the final round of extension. The acetyltransferase M4 appears to have a broad substrate selectivity for its acyl CoA substrate, allowing the in vitro synthesis of novel squalestatins. The biosynthesis of SQS1 requires several oxidative steps likely performed by oxidoreductases M1, R1 and R2. Finally, in support of the identification of the cluster as being responsible for SQS1 production, the cluster contains a gene encoding a putative squalene synthase (SS) R6, suggesting a likely mechanism for self-resistance. The sequence is that of Acyltransferase M4 from Phoma sp. (strain ATCC 20986 / MF5453).